The following is a 194-amino-acid chain: MMVEKSIVQEAKDIQLAMELISLGARLQMLESETQLSRGRLIKLYKELRGSPPPKGMLPFSTDWFMTWEQNIHSSMFYNAYLFLMKSGQCSGVEAVIKAYRLYLEQCPQQAGEAPLLALTRAWTLVRFVDSGMLQLSACSCCGGAFITHAHQPLNGFICSLCQPPSRAVKRRKLSPQLADIIPQLLDEQVKRAI.

C139, C142, C159, and C162 together coordinate Zn(2+).

Belongs to the FlhC family. In terms of assembly, heterohexamer composed of two FlhC and four FlhD subunits. Each FlhC binds a FlhD dimer, forming a heterotrimer, and a hexamer assembles by dimerization of two heterotrimers. Requires Zn(2+) as cofactor.

The protein resides in the cytoplasm. Its function is as follows. Functions in complex with FlhD as a master transcriptional regulator that regulates transcription of several flagellar and non-flagellar operons by binding to their promoter region. Activates expression of class 2 flagellar genes, including fliA, which is a flagellum-specific sigma factor that turns on the class 3 genes. Also regulates genes whose products function in a variety of physiological pathways. The sequence is that of Flagellar transcriptional regulator FlhC from Serratia marcescens.